The following is a 137-amino-acid chain: Urease subunit beta (137 aa).

Residues 113 to 137 (NGHPNAGVKNDEGKQNANKESGDNR) are disordered.

This sequence belongs to the urease beta subunit family. In terms of assembly, heterotrimer of UreA (gamma), UreB (beta) and UreC (alpha) subunits. Three heterotrimers associate to form the active enzyme.

Its subcellular location is the cytoplasm. It catalyses the reaction urea + 2 H2O + H(+) = hydrogencarbonate + 2 NH4(+). It participates in nitrogen metabolism; urea degradation; CO(2) and NH(3) from urea (urease route): step 1/1. In Staphylococcus carnosus (strain TM300), this protein is Urease subunit beta.